The primary structure comprises 454 residues: NADP-specific glutamate dehydrogenase (454 aa).

The residue at position 2 (Ser2) is an N-acetylserine. The active site involves Lys114.

The protein belongs to the Glu/Leu/Phe/Val dehydrogenases family. Homohexamer.

The catalysed reaction is L-glutamate + NADP(+) + H2O = 2-oxoglutarate + NH4(+) + NADPH + H(+). This Neurospora intermedia protein is NADP-specific glutamate dehydrogenase (GDH).